Consider the following 366-residue polypeptide: tRNA/tmRNA (uracil-C(5))-methyltransferase (366 aa).

Residues glutamine 190, tyrosine 218, asparagine 223, glutamate 239, and aspartate 299 each coordinate S-adenosyl-L-methionine. Cysteine 324 acts as the Nucleophile in catalysis. The active-site Proton acceptor is glutamate 358.

It belongs to the class I-like SAM-binding methyltransferase superfamily. RNA M5U methyltransferase family. TrmA subfamily.

It catalyses the reaction uridine(54) in tRNA + S-adenosyl-L-methionine = 5-methyluridine(54) in tRNA + S-adenosyl-L-homocysteine + H(+). The catalysed reaction is uridine(341) in tmRNA + S-adenosyl-L-methionine = 5-methyluridine(341) in tmRNA + S-adenosyl-L-homocysteine + H(+). Its function is as follows. Dual-specificity methyltransferase that catalyzes the formation of 5-methyluridine at position 54 (m5U54) in all tRNAs, and that of position 341 (m5U341) in tmRNA (transfer-mRNA). The protein is tRNA/tmRNA (uracil-C(5))-methyltransferase of Salmonella newport (strain SL254).